Reading from the N-terminus, the 183-residue chain is Adenine phosphoribosyltransferase (183 aa).

This sequence belongs to the purine/pyrimidine phosphoribosyltransferase family. Homodimer.

It is found in the cytoplasm. It carries out the reaction AMP + diphosphate = 5-phospho-alpha-D-ribose 1-diphosphate + adenine. It functions in the pathway purine metabolism; AMP biosynthesis via salvage pathway; AMP from adenine: step 1/1. Its function is as follows. Catalyzes a salvage reaction resulting in the formation of AMP, that is energically less costly than de novo synthesis. The polypeptide is Adenine phosphoribosyltransferase (Shigella flexneri serotype 5b (strain 8401)).